Here is a 238-residue protein sequence, read N- to C-terminus: Large ribosomal subunit protein uL2 (238 aa).

Residues 1–11 show a composition bias toward polar residues; the sequence is MGKRLISQNRG. Disordered regions lie at residues 1 to 22 and 202 to 223; these read MGKRLISQNRGRGTPTYRAPSH and FGGGAWKHPGKPTTVSRNAPPG.

It belongs to the universal ribosomal protein uL2 family. As to quaternary structure, part of the 50S ribosomal subunit. Forms a bridge to the 30S subunit in the 70S ribosome.

Its function is as follows. One of the primary rRNA binding proteins. Required for association of the 30S and 50S subunits to form the 70S ribosome, for tRNA binding and peptide bond formation. It has been suggested to have peptidyltransferase activity; this is somewhat controversial. Makes several contacts with the 16S rRNA in the 70S ribosome. The chain is Large ribosomal subunit protein uL2 from Methanosarcina acetivorans (strain ATCC 35395 / DSM 2834 / JCM 12185 / C2A).